We begin with the raw amino-acid sequence, 252 residues long: Chitooligosaccharide deacetylase (252 aa).

Positions 61 and 125 each coordinate Mg(2+).

The protein belongs to the YdjC deacetylase family. ChbG subfamily. In terms of assembly, homodimer. Mg(2+) is required as a cofactor.

It is found in the cytoplasm. It catalyses the reaction N,N'-diacetylchitobiose + H2O = N-acetyl-beta-D-glucosaminyl-(1-&gt;4)-D-glucosamine + acetate. The catalysed reaction is diacetylchitobiose-6'-phosphate + H2O = N'-monoacetylchitobiose-6'-phosphate + acetate. It participates in glycan degradation; chitin degradation. Involved in the degradation of chitin. ChbG is essential for growth on the acetylated chitooligosaccharides chitobiose and chitotriose but is dispensable for growth on cellobiose and chitosan dimer, the deacetylated form of chitobiose. Deacetylation of chitobiose-6-P and chitotriose-6-P is necessary for both the activation of the chb promoter by the regulatory protein ChbR and the hydrolysis of phosphorylated beta-glucosides by the phospho-beta-glucosidase ChbF. Catalyzes the removal of only one acetyl group from chitobiose-6-P to yield monoacetylchitobiose-6-P, the inducer of ChbR and the substrate of ChbF. The protein is Chitooligosaccharide deacetylase of Escherichia coli O127:H6 (strain E2348/69 / EPEC).